A 238-amino-acid chain; its full sequence is Lipid transferase CIDEC (238 aa).

Residues 1 to 35 form a required for liquid-liquid phase separation (LLPS) region; that stretch reads MDYAMKSLSLLYPRSLSRHVAVSTAVVTQQLVSEP. The CIDE-N domain maps to 41 to 118; it reads RARPCRVSTA…VLQKGQKWKS (78 aa).

The protein belongs to the CIDE family. In terms of assembly, homodimer. Interacts with CIDEA. Homooligomer; undergoes liquid-liquid phase separation (LLPS) via its N-terminus, facilitating lipid droplet fusion, occurs at the lipid droplet contact sites. Interacts with PLIN1. Interacts with NFAT5; this interaction is direct and retains NFAT5 in the cytoplasm. Interacts with CEBPB. Interacts with isoform CLSTN3beta of CLSTN3; inhibiting the lipid transferase activity of CIDEC. Post-translationally, ubiquitinated and targeted to proteasomal degradation, resulting in a short half-life (about 15 minutes in 3T3-L1 cells). Protein stability depends on triaclyglycerol synthesis, fatty acid availability and lipid droplet formation.

Its subcellular location is the lipid droplet. The protein resides in the endoplasmic reticulum. It localises to the nucleus. The enzyme catalyses a triacyl-sn-glycerol(in) = a triacyl-sn-glycerol(out). Functionally, lipid transferase specifically expressed in white adipose tissue, which promotes unilocular lipid droplet formation by mediating lipid droplet fusion. Lipid droplet fusion promotes their enlargement, restricting lipolysis and favoring lipid storage. Localizes on the lipid droplet surface, at focal contact sites between lipid droplets, and mediates atypical lipid droplet fusion by undergoing liquid-liquid phase separation (LLPS) and promoting directional net neutral lipid transfer from the smaller to larger lipid droplets. The transfer direction may be driven by the internal pressure difference between the contacting lipid droplet pair. Its role in neutral lipid transfer and lipid droplet enlargement is activated by the interaction with PLIN1. May also act as a CEBPB coactivator in the white adipose tissue to control the expression of a subset of CEBPB downstream target genes, including SOCS1, SOCS3, TGFB1, TGFBR1, ID2 and XDH. When overexpressed in preadipocytes, induces apoptosis or increases cell susceptibility to apoptosis induced by serum deprivation or TGFB treatment. The sequence is that of Lipid transferase CIDEC from Rattus norvegicus (Rat).